The sequence spans 455 residues: Asparagine--tRNA ligase (455 aa).

It belongs to the class-II aminoacyl-tRNA synthetase family. Homodimer.

The protein resides in the cytoplasm. It catalyses the reaction tRNA(Asn) + L-asparagine + ATP = L-asparaginyl-tRNA(Asn) + AMP + diphosphate + H(+). The chain is Asparagine--tRNA ligase from Mycoplasma pneumoniae (strain ATCC 29342 / M129 / Subtype 1) (Mycoplasmoides pneumoniae).